Consider the following 123-residue polypeptide: Hydrogenase maturation factor HypA (123 aa).

Histidine 2 contributes to the Ni(2+) binding site. Zn(2+) contacts are provided by cysteine 73, cysteine 76, cysteine 90, and cysteine 93.

It belongs to the HypA/HybF family.

Functionally, involved in the maturation of [NiFe] hydrogenases. Required for nickel insertion into the metal center of the hydrogenase. This Roseiflexus sp. (strain RS-1) protein is Hydrogenase maturation factor HypA.